Here is a 231-residue protein sequence, read N- to C-terminus: MTQDELKRLVGEAAARYVTENVPQGAVIGVGTGSTANCFIDALAAVKDRYRGAVSSSVATTERLKSHGIKVFDLNEIESLQVYVDGADEIDGSGAMIKGGGGALTREKIVASVAETFVCIADASKRVAVLGQFPLPVEVVPMARTAIGRRLAALGGVPVLRVKQDGAPYVTDNGNEILDVKGLRIDDPRALEAAINGWPGVVTVGLFAQRGADLCLLGTERGVETLRYAAH.

Residues 32–35, 85–88, and 98–101 each bind substrate; these read TGST, DGAD, and KGGG. Glu107 functions as the Proton acceptor in the catalytic mechanism. Lys125 is a binding site for substrate.

This sequence belongs to the ribose 5-phosphate isomerase family. Homodimer.

The catalysed reaction is aldehydo-D-ribose 5-phosphate = D-ribulose 5-phosphate. The protein operates within carbohydrate degradation; pentose phosphate pathway; D-ribose 5-phosphate from D-ribulose 5-phosphate (non-oxidative stage): step 1/1. Catalyzes the reversible conversion of ribose-5-phosphate to ribulose 5-phosphate. This Burkholderia mallei (strain NCTC 10247) protein is Ribose-5-phosphate isomerase A.